The chain runs to 116 residues: UPF0342 protein LBA1592 (116 aa).

Belongs to the UPF0342 family.

This chain is UPF0342 protein LBA1592, found in Lactobacillus acidophilus (strain ATCC 700396 / NCK56 / N2 / NCFM).